Here is a 268-residue protein sequence, read N- to C-terminus: Putative ABC transporter ATP-binding protein LMOf2365_1216 (268 aa).

An ABC transporter domain is found at 2–237; it reads LKTEHISFQY…KSNVEQAGLV (236 aa). Residue 35–42 participates in ATP binding; sequence GANGSGKS.

This sequence belongs to the ABC transporter superfamily.

It localises to the cell membrane. Its function is as follows. Probably part of an ABC transporter complex. Responsible for energy coupling to the transport system. The sequence is that of Putative ABC transporter ATP-binding protein LMOf2365_1216 from Listeria monocytogenes serotype 4b (strain F2365).